Here is a 202-residue protein sequence, read N- to C-terminus: LexA repressor (202 aa).

The segment at residues 28–48 is a DNA-binding region (H-T-H motif); it reads RAEIAQRLGFRSPNAAEEHLK. Active-site for autocatalytic cleavage activity residues include Ser119 and Lys156.

This sequence belongs to the peptidase S24 family. In terms of assembly, homodimer.

The enzyme catalyses Hydrolysis of Ala-|-Gly bond in repressor LexA.. In terms of biological role, represses a number of genes involved in the response to DNA damage (SOS response), including recA and lexA. Binds to the 16 bp palindromic sequence 5'-CTGTATATATATACAG-3'. In the presence of single-stranded DNA, RecA interacts with LexA causing an autocatalytic cleavage which disrupts the DNA-binding part of LexA, leading to derepression of the SOS regulon and eventually DNA repair. This Enterobacter sp. (strain 638) protein is LexA repressor.